We begin with the raw amino-acid sequence, 245 residues long: Carboxy-S-adenosyl-L-methionine synthase (245 aa).

Residues Tyr-42, Gly-67–Ser-69, Asp-92–Asn-93, Asp-120–Ile-121, Asn-135, and Arg-202 each bind S-adenosyl-L-methionine.

Belongs to the class I-like SAM-binding methyltransferase superfamily. Cx-SAM synthase family. In terms of assembly, homodimer.

The enzyme catalyses prephenate + S-adenosyl-L-methionine = carboxy-S-adenosyl-L-methionine + 3-phenylpyruvate + H2O. In terms of biological role, catalyzes the conversion of S-adenosyl-L-methionine (SAM) to carboxy-S-adenosyl-L-methionine (Cx-SAM). The protein is Carboxy-S-adenosyl-L-methionine synthase of Vibrio parahaemolyticus serotype O3:K6 (strain RIMD 2210633).